We begin with the raw amino-acid sequence, 651 residues long: Maternal embryonic leucine zipper kinase (651 aa).

In terms of domain architecture, Protein kinase spans 11-263; the sequence is YELHETIGTG…MKNLLNHPWI (253 aa). ATP is bound by residues 17-25 and lysine 40; that span reads IGTGGFAKV. Threonine 56 carries the phosphothreonine; by autocatalysis modification. Aspartate 132 serves as the catalytic Proton acceptor. Tyrosine 163 carries the phosphotyrosine; by autocatalysis modification. Phosphothreonine; by autocatalysis is present on threonine 167. A phosphoserine; by autocatalysis mark is found at serine 171 and serine 253. A UBA-like region spans residues 282–321; that stretch reads LDDDCVTELSVHHRNNRQTMEDLISLWQYDHLTATYLLLL. Residues 326 to 651 are autoinhibitory region; sequence RGKPVRLRLS…VEDILSSCKV (326 aa). Phosphoserine; by autocatalysis is present on residues serine 336, serine 343, and serine 356. Phosphotyrosine is present on tyrosine 367. Phosphoserine; by autocatalysis is present on serine 391. Position 398 is a phosphothreonine; by autocatalysis (threonine 398). Serine 407 bears the Phosphoserine; by autocatalysis mark. Threonine 409 is modified (phosphothreonine). Residue serine 431 is modified to Phosphoserine; by autocatalysis. At threonine 478 the chain carries Phosphothreonine. Residue threonine 494 is modified to Phosphothreonine; by autocatalysis. Serine 498 carries the post-translational modification Phosphoserine. At serine 505 the chain carries Phosphoserine; by autocatalysis. Position 518 is a phosphothreonine (threonine 518). The residue at position 529 (serine 529) is a Phosphoserine; by autocatalysis. A Phosphoserine modification is found at serine 529. A Phosphothreonine; by autocatalysis modification is found at threonine 539. A KA1 domain is found at 602-651; that stretch reads SDFGKVTMQFELEVCQLQKPDVVGIRRQRLKGDAWVYKRLVEDILSSCKV.

The protein belongs to the protein kinase superfamily. CAMK Ser/Thr protein kinase family. SNF1 subfamily. As to quaternary structure, monomer. Interacts with ZNF622 and PPP1R8. Autophosphorylated: autophosphorylation of the T-loop at Thr-167 and Ser-171 is required for activation. Thr-478 phosphorylation during mitosis promotes interaction with PPP1R8. Expressed in placenta, kidney, thymus, testis, ovary and intestine.

Its subcellular location is the cell membrane. The catalysed reaction is L-tyrosyl-[protein] + ATP = O-phospho-L-tyrosyl-[protein] + ADP + H(+). It carries out the reaction L-seryl-[protein] + ATP = O-phospho-L-seryl-[protein] + ADP + H(+). The enzyme catalyses L-threonyl-[protein] + ATP = O-phospho-L-threonyl-[protein] + ADP + H(+). Its activity is regulated as follows. Activated by autophosphorylation of the T-loop at Thr-167 and Ser-171: in contrast to other members of the SNF1 subfamily, phosphorylation at Thr-167 is not mediated by STK11/LKB1 but via autophosphorylation instead. Inhibited by calcium-binding. Kinase activity is also regulated by reducing agents: dithiothreitol (DTT) or reduced glutathione are required for kinase activity in vitro; such dependence is however not due to the presence of disulfide bonds. Serine/threonine-protein kinase involved in various processes such as cell cycle regulation, self-renewal of stem cells, apoptosis and splicing regulation. Has a broad substrate specificity; phosphorylates BCL2L14, CDC25B, MAP3K5/ASK1 and ZNF622. Acts as an activator of apoptosis by phosphorylating and activating MAP3K5/ASK1. Acts as a regulator of cell cycle, notably by mediating phosphorylation of CDC25B, promoting localization of CDC25B to the centrosome and the spindle poles during mitosis. Plays a key role in cell proliferation and carcinogenesis. Required for proliferation of embryonic and postnatal multipotent neural progenitors. Phosphorylates and inhibits BCL2L14, possibly leading to affect mammary carcinogenesis by mediating inhibition of the pro-apoptotic function of BCL2L14. Also involved in the inhibition of spliceosome assembly during mitosis by phosphorylating ZNF622, thereby contributing to its redirection to the nucleus. May also play a role in primitive hematopoiesis. This Homo sapiens (Human) protein is Maternal embryonic leucine zipper kinase (MELK).